Here is a 636-residue protein sequence, read N- to C-terminus: Bifunctional phosphonoacetaldehyde hydrolase/aminoethylphosphonate transaminase (636 aa).

The phosphonoacetaldehyde hydrolase stretch occupies residues 1 to 276 (MKKIYGEKIK…IKSDFVPEND (276 aa)). The Nucleophile role is filled by D15. D15 and A17 together coordinate Mg(2+). K56 functions as the Schiff-base intermediate with substrate in the catalytic mechanism. Residue D189 participates in Mg(2+) binding. Positions 277–636 (YILLTPGPLS…ADVIEKFINR (360 aa)) are 2-aminoethylphosphonate--pyruvate transaminase. K465 is modified (N6-(pyridoxal phosphate)lysine).

The protein in the N-terminal section; belongs to the HAD-like hydrolase superfamily. PhnX family. It in the C-terminal section; belongs to the class-V pyridoxal-phosphate-dependent aminotransferase family. PhnW subfamily. Homodimer. The cofactor is Mg(2+). It depends on pyridoxal 5'-phosphate as a cofactor.

It carries out the reaction (2-aminoethyl)phosphonate + pyruvate = phosphonoacetaldehyde + L-alanine. The catalysed reaction is phosphonoacetaldehyde + H2O = acetaldehyde + phosphate + H(+). Functionally, involved in phosphonate degradation. In Clostridioides difficile (strain 630) (Peptoclostridium difficile), this protein is Bifunctional phosphonoacetaldehyde hydrolase/aminoethylphosphonate transaminase (phnXW).